Consider the following 349-residue polypeptide: Small ribosomal subunit protein uS2 (349 aa).

The protein belongs to the universal ribosomal protein uS2 family.

The sequence is that of Small ribosomal subunit protein uS2 from Methylobacterium sp. (strain 4-46).